The following is a 174-amino-acid chain: ATP synthase subunit delta (174 aa).

Belongs to the ATPase delta chain family. As to quaternary structure, F-type ATPases have 2 components, F(1) - the catalytic core - and F(0) - the membrane proton channel. F(1) has five subunits: alpha(3), beta(3), gamma(1), delta(1), epsilon(1). F(0) has three main subunits: a(1), b(2) and c(10-14). The alpha and beta chains form an alternating ring which encloses part of the gamma chain. F(1) is attached to F(0) by a central stalk formed by the gamma and epsilon chains, while a peripheral stalk is formed by the delta and b chains.

The protein resides in the cell inner membrane. Its function is as follows. F(1)F(0) ATP synthase produces ATP from ADP in the presence of a proton or sodium gradient. F-type ATPases consist of two structural domains, F(1) containing the extramembraneous catalytic core and F(0) containing the membrane proton channel, linked together by a central stalk and a peripheral stalk. During catalysis, ATP synthesis in the catalytic domain of F(1) is coupled via a rotary mechanism of the central stalk subunits to proton translocation. In terms of biological role, this protein is part of the stalk that links CF(0) to CF(1). It either transmits conformational changes from CF(0) to CF(1) or is implicated in proton conduction. This is ATP synthase subunit delta from Francisella tularensis subsp. mediasiatica (strain FSC147).